Reading from the N-terminus, the 114-residue chain is Large ribosomal subunit protein bL17 (114 aa).

This sequence belongs to the bacterial ribosomal protein bL17 family. Part of the 50S ribosomal subunit. Contacts protein L32.

The polypeptide is Large ribosomal subunit protein bL17 (Halothermothrix orenii (strain H 168 / OCM 544 / DSM 9562)).